A 192-amino-acid chain; its full sequence is Sarcoplasmic calcium-binding protein, alpha-B and -A chains (192 aa).

At Ala-1 the chain carries N-acetylalanine. EF-hand domains follow at residues Trp-4–Ile-39, Ile-56–Gly-91, Ala-100–Phe-135, and Ala-136–Phe-171. Positions 17, 19, 21, 28, 69, 71, 73, 75, 80, 113, 115, 117, 119, and 124 each coordinate Ca(2+).

In terms of assembly, SCPs from crayfish, lobster, and shrimp are polymorphic dimers; three isotypes (alpha-alpha, alpha-beta, and beta-beta) have been identified.

Like parvalbumins, SCPs seem to be more abundant in fast contracting muscles, but no functional relationship can be established from this distribution. This chain is Sarcoplasmic calcium-binding protein, alpha-B and -A chains, found in Penaeus sp. (Penoeid shrimp).